Consider the following 390-residue polypeptide: Matrix metalloproteinase-23 (390 aa).

Residues 1–19 (MGRGARVPSEAPGAGVERR) are Cytoplasmic-facing. A propeptide spanning residues 1–78 (MGRGARVPSE…PGPLAPRRRR (78 aa)) is cleaved from the precursor. A helical; Signal-anchor for type II membrane protein transmembrane segment spans residues 20–40 (WLGAALVALCLLPALVLLARL). Topologically, residues 41–390 (GAPAVPAWSA…TYSWRVRVRG (350 aa)) are lumenal. Residues N92 and N148 are each glycosylated (N-linked (GlcNAc...) asparagine). Zn(2+) is bound at residue H211. E212 is a catalytic residue. Residues H215 and H221 each coordinate Zn(2+). N232 is a glycosylation site (N-linked (GlcNAc...) asparagine). Residues 255 to 289 (CLDRLFVCASWARRGFCDARRRLMKRLCPSSCDFC) enclose the ShKT domain. Intrachain disulfides connect C255–C289, C262–C282, and C271–C286. One can recognise an Ig-like C2-type domain in the interval 295–380 (PTVATTPPPP…VVRRQQRVLT (86 aa)). N316 carries N-linked (GlcNAc...) asparagine glycosylation. A disulfide bond links C321 and C370.

This sequence belongs to the peptidase M10A family. Zn(2+) serves as cofactor. Post-translationally, N-glycosylated. Proteolytic cleavage might yield an active form. Predominantly expressed in ovary, testis and prostate.

It localises to the endoplasmic reticulum membrane. The protein localises to the membrane. With respect to regulation, inhibited by TIMP2. In terms of biological role, protease. May regulate the surface expression of some potassium channels by retaining them in the endoplasmic reticulum. This is Matrix metalloproteinase-23 (MMP23B) from Homo sapiens (Human).